Here is a 442-residue protein sequence, read N- to C-terminus: MEKKKVVIIGGGAAGMSAASRVKRLRPEWDVKVFEATEWVSHAPCGIPYVVEGIAPKEKLMHYPPEVFIKKRGIDLHLKAEVIEVETGYVRVRENGEEKSYEWDYLVFANGASPQIPEIEGVDLPGVFTADLPPDAVAITEYMEKNKVEDVVIIGTGYIALEMAEAFVTRGKNVTLIGRSERVLRKTFDKEITDIVEEKLRQHLNLRLHEKTLSIEGRERVEKVITDGGEYKADLVIIATGIKPNVELAKQLGVKIGETGAIWTNEKMQTSVENVYAAGDVAETKHVITGKRVWIPLAPAGNKMGYVAGSNIAGKEIEFPGVLGTSITKFMDLEIGKTGLTENEAVKEGYDVRTAFIKANTKPHYYPGGREIWLKGVVDNETNRLLGVQAVGAEILPRIDSAAAMITAGFTTKDVFFTDLAYAPPFAPVWDPLIVLARVLKF.

Residue 13–14 (AA) coordinates FAD. R24 serves as a coordination point for CoA. Residues 35–36 (EA) and 42–44 (HAP) contribute to the FAD site. Residues 41–45 (SHAPC), 62–63 (HY), and R72 each bind CoA. C45 serves as the catalytic Redox-active. FAD-binding residues include V82, D280, and A298. Positions 302 and 358 each coordinate CoA. FAD is bound at residue Y422. CoA is bound by residues W430 and R438.

The protein belongs to the class-III pyridine nucleotide-disulfide oxidoreductase family. In terms of assembly, homodimer. Requires FAD as cofactor.

The protein resides in the cytoplasm. It carries out the reaction hydrogen sulfide + NADP(+) = sulfur + NADPH. The enzyme catalyses hydrogen sulfide + NAD(+) = sulfur + NADH. It catalyses the reaction NADP(+) + 2 CoA = CoA-disulfide + NADPH + H(+). The catalysed reaction is NAD(+) + 2 CoA = CoA-disulfide + NADH + H(+). Its function is as follows. Catalyzes the CoA-dependent reduction of elemental sulfur (S(0)) to produce hydrogen sulfide. Can use both NADPH and NADH, but shows a preference for NADPH. May enable S(0) to be used, via sulfide, for iron-sulfur cluster synthesis by SipA. Also shows coenzyme A disulfide reductase (CoADR) activity with both NADH and NADPH. However, CoADR specific activity is about 20-fold lower than the sulfur reduction assay and CoADR activity appears to be an artifactual side reaction and is not thought to have any physiological relevance. Also shows NAD(P)H oxidase activity with both NADH and NADPH. The polypeptide is NAD(P)H sulfur oxidoreductase (CoA-dependent) (Pyrococcus furiosus (strain ATCC 43587 / DSM 3638 / JCM 8422 / Vc1)).